We begin with the raw amino-acid sequence, 313 residues long: MEKRKIILDCDPGHDDAIAIMMAAKHPAIDLLGITIVAGNQTLDKTLINGLNVCQKLEINVPVYAGMPQPIMRQQIVADNIHGETGLDGPVFEPLTRQAESTHAVKYIIDTLMASDGDITLVPVGPLSNIAVAMRMQPAILPKIREIVLMGGAYGTGNFTPSAEFNIFADPEAARVVFTSGVPLVMMGLDLTNQTVCTPDVIARMERAGGPAGEMFSDIMNFTLKTQFENYGLAGGPVHDATCIGYLINPDGIKTQEMYVEVDVNSGPCYGRTVCDELGVLGKPANTKVGITIDTDWFWGLVEECVRGYIKTH.

Aspartate 11 acts as the Proton acceptor in catalysis. 3 residues coordinate Ca(2+): aspartate 11, aspartate 16, and valine 124. Glutamine 227 and histidine 239 together coordinate substrate. Ca(2+) is bound at residue aspartate 240.

It belongs to the IUNH family. RihB subfamily. As to quaternary structure, homotetramer. The cofactor is Ca(2+).

It carries out the reaction a pyrimidine ribonucleoside + H2O = a pyrimidine nucleobase + D-ribose. In terms of biological role, hydrolyzes cytidine or uridine to ribose and cytosine or uracil, respectively. Has a clear preference for cytidine over uridine. Strictly specific for ribonucleosides. The chain is Pyrimidine-specific ribonucleoside hydrolase RihB from Shigella sonnei (strain Ss046).